The following is a 476-amino-acid chain: NADP-dependent glyceraldehyde-3-phosphate dehydrogenase (476 aa).

Arginine 103 lines the substrate pocket. Serine 151 is a binding site for NADP(+). 154–155 serves as a coordination point for substrate; it reads NY. NADP(+) is bound by residues lysine 177, threonine 180, aspartate 215, and 230 to 251; that span reads GSTPVGEHIGHLAGMRPIMLEL. Active-site residues include glutamate 250 and cysteine 284. 283–285 lines the substrate pocket; sequence RCT. Glutamate 377 contacts NADP(+). Residue arginine 437 coordinates substrate.

The protein belongs to the aldehyde dehydrogenase family. As to quaternary structure, homotetramer.

It carries out the reaction D-glyceraldehyde 3-phosphate + NADP(+) + H2O = (2R)-3-phosphoglycerate + NADPH + 2 H(+). In terms of biological role, catalyzes the irreversible NADP-dependent oxidation of glyceraldehyde-3-phosphate to 3-phosphoglycerate. Is not able to use NAD instead of NADP. May play an important role in NADPH production in S.equinus. The sequence is that of NADP-dependent glyceraldehyde-3-phosphate dehydrogenase (gapN) from Streptococcus equinus (Streptococcus bovis).